A 281-amino-acid chain; its full sequence is Glycerol uptake facilitator protein (281 aa).

The Cytoplasmic segment spans residues 1-5; that stretch reads MSQTS. The chain crosses the membrane as a helical span at residues 6–34; sequence TLKGQCIAEFLGTGLLIFFGVGCVAALKV. Residues 35–39 are Periplasmic-facing; the sequence is AGASF. The chain crosses the membrane as a helical span at residues 40–60; it reads GQWEISVIWGLGVAMAIYLTA. Residues 61–63 lie on the Cytoplasmic side of the membrane; it reads GVS. An intramembrane segment occupies 64 to 67; sequence GAHL. The short motif at 68–70 is the NPA 1 element; it reads NPA. Residues 68 to 78 constitute an intramembrane region (helical); that stretch reads NPAVTIALWLF. Topologically, residues 79–84 are cytoplasmic; it reads ACFDKR. The helical transmembrane segment at 85–108 threads the bilayer; that stretch reads KVIPFIVSQVAGAFCAAALVYGLY. Topologically, residues 109–143 are periplasmic; the sequence is YNLFFDFEQTHHIVRGSVESVDLAGTFSTYPNPHI. A helical membrane pass occupies residues 144-169; it reads NFVQAFAVEMVITAILMGLILALTDD. Residues 170-177 are Cytoplasmic-facing; sequence GNGVPRGP. A helical transmembrane segment spans residues 178-194; it reads LAPLLIGLLIAVIGASM. The Periplasmic portion of the chain corresponds to 195–198; it reads GPLT. Residues 199–202 lie within the membrane without spanning it; the sequence is GFAM. Residues 203–205 carry the NPA 2 motif; it reads NPA. Residues 203–216 constitute an intramembrane region (helical); it reads NPARDFGPKVFAWL. The Periplasmic portion of the chain corresponds to 217-231; that stretch reads AGWGNVAFTGGRDIP. Residues 232–254 traverse the membrane as a helical segment; that stretch reads YFLVPLFSPIVGAIVGAFAYRKL. At 255–281 the chain is on the cytoplasmic side; that stretch reads IGRHLPCDICVVEEKETTTPSEQKASL.

The protein belongs to the MIP/aquaporin (TC 1.A.8) family. As to quaternary structure, homotetramer.

It localises to the cell inner membrane. It catalyses the reaction glycerol(in) = glycerol(out). Mediates glycerol diffusion across the cytoplasmic membrane via a pore-type mechanism. The polypeptide is Glycerol uptake facilitator protein (glpF) (Shigella flexneri).